Here is a 101-residue protein sequence, read N- to C-terminus: Small integral membrane protein 21 (101 aa).

The chain crosses the membrane as a helical span at residues 49–65; it reads HIRFFTLLVLFHVMVLL.

It is found in the membrane. This is Small integral membrane protein 21 (SMIM21) from Homo sapiens (Human).